The chain runs to 364 residues: MSGLFETLGRRALFTFDAEQAHGLSITGLKTGIVTCRTPEDPALSVKVAGLKFPNPLGMAAGYDKNAEVPDALLKLGFGFAEVGTLTPRPQSGNPRPRIFRLVDDKAVINRLGFNNEGHEAAFKRLSRRAGKSGIVGVNIGANKDAEDRIADYVAGIRRFYLLARYFTVNISSPNTPGLRNLQAREALHELLSRVLEARDEEGNMCTLKRPVFLKIAPDLTDEELDDIAAEADAQKLDGIIVSNTTLSRSGLKNPENSNETGGLSGAPLFERSTVVLARMRERVGPDMPLIGVGGIDSAETALAKIKAGADLVQLYTGLIYRGPGLPGEILRGLSTAIKHEGVSSIAELRDRDTKEWAARKLIS.

FMN is bound by residues Ala61 to Lys65 and Thr85. Lys65 is a substrate binding site. Asn110–Phe114 contacts substrate. Residues Asn139 and Asn170 each contribute to the FMN site. Asn170 serves as a coordination point for substrate. Ser173 functions as the Nucleophile in the catalytic mechanism. Position 175 (Asn175) interacts with substrate. FMN contacts are provided by Lys215 and Ser243. Asn244 to Thr245 lines the substrate pocket. Residues Gly266, Gly295, and Tyr316–Thr317 contribute to the FMN site.

This sequence belongs to the dihydroorotate dehydrogenase family. Type 2 subfamily. Monomer. It depends on FMN as a cofactor.

It is found in the cell membrane. It carries out the reaction (S)-dihydroorotate + a quinone = orotate + a quinol. Its pathway is pyrimidine metabolism; UMP biosynthesis via de novo pathway; orotate from (S)-dihydroorotate (quinone route): step 1/1. Its function is as follows. Catalyzes the conversion of dihydroorotate to orotate with quinone as electron acceptor. This chain is Dihydroorotate dehydrogenase (quinone), found in Brucella abortus (strain S19).